We begin with the raw amino-acid sequence, 122 residues long: Large ribosomal subunit protein uL14 (122 aa).

The protein belongs to the universal ribosomal protein uL14 family. Part of the 50S ribosomal subunit. Forms a cluster with proteins L3 and L19. In the 70S ribosome, L14 and L19 interact and together make contacts with the 16S rRNA in bridges B5 and B8.

Its function is as follows. Binds to 23S rRNA. Forms part of two intersubunit bridges in the 70S ribosome. The polypeptide is Large ribosomal subunit protein uL14 (Pseudomonas aeruginosa (strain LESB58)).